Reading from the N-terminus, the 450-residue chain is Glucose-6-phosphate isomerase (450 aa).

A Phosphothreonine modification is found at Thr-39. Glu-291 (proton donor) is an active-site residue. Residues His-312 and Lys-426 contribute to the active site.

It belongs to the GPI family.

It localises to the cytoplasm. It catalyses the reaction alpha-D-glucose 6-phosphate = beta-D-fructose 6-phosphate. It functions in the pathway carbohydrate biosynthesis; gluconeogenesis. The protein operates within carbohydrate degradation; glycolysis; D-glyceraldehyde 3-phosphate and glycerone phosphate from D-glucose: step 2/4. In terms of biological role, catalyzes the reversible isomerization of glucose-6-phosphate to fructose-6-phosphate. This Halalkalibacterium halodurans (strain ATCC BAA-125 / DSM 18197 / FERM 7344 / JCM 9153 / C-125) (Bacillus halodurans) protein is Glucose-6-phosphate isomerase.